The primary structure comprises 172 residues: Diphosphoinositol polyphosphate phosphohydrolase 1 (172 aa).

M1 is subject to N-acetylmethionine. Substrate contacts are provided by residues R10, 18–20 (KKR), and 39–41 (SSR). One can recognise a Nudix hydrolase domain in the interval 17-142 (YKKRAACLCF…KPVQASYFET (126 aa)). Residues G50 and E66 each coordinate Mg(2+). The short motif at 51–72 (GGMEPEEEPSVAAVREVCEEAG) is the Nudix box element. E69 serves as the catalytic Proton acceptor. E70 provides a ligand contact to Mg(2+). Substrate is bound by residues 89–91 (RKH), R115, and K133.

The protein belongs to the Nudix hydrolase family. DIPP subfamily. In terms of assembly, monomer. Mg(2+) serves as cofactor. Requires Mn(2+) as cofactor. Zn(2+) is required as a cofactor. Widely expressed. Expressed at higher level in brain, heart, pancreas and liver. Also expressed in placenta, lung and kidney.

The protein resides in the cytoplasm. It localises to the nucleus. The catalysed reaction is diphospho-myo-inositol polyphosphate + H2O = myo-inositol polyphosphate + phosphate.. The enzyme catalyses 5-diphospho-1D-myo-inositol 1,2,3,4,6-pentakisphosphate + H2O = 1D-myo-inositol hexakisphosphate + phosphate + H(+). It catalyses the reaction 3,5-bis(diphospho)-1D-myo-inositol 1,2,4,6-tetrakisphosphate + H2O = 3-diphospho-1D-myo-inositol 1,2,4,5,6-pentakisphosphate + phosphate + 2 H(+). It carries out the reaction [phosphate](n+1) + n H2O = (n+1) phosphate + n H(+). The catalysed reaction is P(1),P(5)-bis(5'-adenosyl) pentaphosphate + H2O = ADP + ATP + 2 H(+). The enzyme catalyses P(1),P(6)-bis(5'-adenosyl) hexaphosphate + H2O = 2 ATP + 2 H(+). It catalyses the reaction P(1),P(4)-bis(5'-adenosyl) tetraphosphate + H2O = AMP + ATP + 2 H(+). It carries out the reaction a 5'-end (N(7)-methyl 5'-triphosphoguanosine)-ribonucleoside in mRNA + H2O = N(7)-methyl-GMP + a 5'-end diphospho-ribonucleoside in mRNA + 2 H(+). The catalysed reaction is a 5'-end (N(7)-methyl 5'-triphosphoguanosine)-ribonucleoside in mRNA + H2O = N(7)-methyl-GDP + a 5'-end phospho-ribonucleoside in mRNA + 2 H(+). With respect to regulation, endopolyphospahatase activity is inhibited by NaF, NaPPi, beta-glycerol phosphate and heparin. 5-diphosphoinositol pentakisphosphate (5-InsP7) inhibits its mRNA decapping activity. Cleaves a beta-phosphate from the diphosphate groups in PP-InsP5 (diphosphoinositol pentakisphosphate) and [PP]2-InsP4 (bisdiphosphoinositol tetrakisphosphate), suggesting that it may play a role in signal transduction. InsP6 (inositol hexakisphosphate) is not a substrate. Acts as a negative regulator of the ERK1/2 pathway. Also able to catalyze the hydrolysis of dinucleoside oligophosphates, with diadenosine 5',5'''-P1,P6-hexaphosphate (Ap6A) and diadenosine 5',5'''- P1,P5-pentaphosphate (Ap5A) being the preferred substrates. The major reaction products are ADP and p4a from Ap6A and ADP and ATP from Ap5A. Also able to hydrolyze 5-phosphoribose 1-diphosphate. Acts as a decapping enzyme that modulates the stability of a subset of mRNAs implicated in cell motility. Hydrolyzes monomethylated capped RNA after both the alpha- and beta-phosphates generating m7GMP + ppRNA and m7GDP + pRNA. Can hydrolyze unmethylated capped RNAs. Divalent cations zinc, magnesium and manganese determine its substrate specificity. Exhibits diphosphoinositol polyphosphate phosphohydrolase in the presence of magnesium ions, diadenosine hexaphosphate hydrolase activity in the presence of manganese ions and endopolyphosphatase activity in the presence of zinc ions. Plays an important role in limiting DNA damage and maintaining cell survival upon oxidative stress via its endopolyphosphatase activity. This chain is Diphosphoinositol polyphosphate phosphohydrolase 1, found in Homo sapiens (Human).